We begin with the raw amino-acid sequence, 318 residues long: NADH-ubiquinone oxidoreductase chain 1 (318 aa).

8 helical membrane-spanning segments follow: residues 2–22 (FLIN…FLTL), 69–89 (FLFT…WAPL), 102–122 (LLFI…SGWA), 146–166 (MTTI…TAFA), 171–191 (HLWL…STLA), 222–242 (LFFM…VILF), 253–273 (EIST…FLWV), and 294–314 (LPLT…LACI).

This sequence belongs to the complex I subunit 1 family.

Its subcellular location is the mitochondrion inner membrane. The catalysed reaction is a ubiquinone + NADH + 5 H(+)(in) = a ubiquinol + NAD(+) + 4 H(+)(out). Its function is as follows. Core subunit of the mitochondrial membrane respiratory chain NADH dehydrogenase (Complex I) that is believed to belong to the minimal assembly required for catalysis. Complex I functions in the transfer of electrons from NADH to the respiratory chain. The immediate electron acceptor for the enzyme is believed to be ubiquinone. This is NADH-ubiquinone oxidoreductase chain 1 (MT-ND1) from Mammuthus primigenius (Siberian woolly mammoth).